Here is a 95-residue protein sequence, read N- to C-terminus: Small ribosomal subunit protein bS16 (95 aa).

It belongs to the bacterial ribosomal protein bS16 family.

The sequence is that of Small ribosomal subunit protein bS16 from Thermotoga neapolitana (strain ATCC 49049 / DSM 4359 / NBRC 107923 / NS-E).